We begin with the raw amino-acid sequence, 371 residues long: Maltose/maltodextrin import ATP-binding protein MalK (371 aa).

The ABC transporter domain occupies 4–234; it reads VQLQNVTKAW…PADRFVAGFI (231 aa). 36–43 is a binding site for ATP; the sequence is GPSGCGKS.

This sequence belongs to the ABC transporter superfamily. Maltooligosaccharide importer (TC 3.A.1.1.1) family. As to quaternary structure, the complex is composed of two ATP-binding proteins (MalK), two transmembrane proteins (MalG and MalK) and a solute-binding protein (MalE).

The protein localises to the cell inner membrane. The catalysed reaction is D-maltose(out) + ATP + H2O = D-maltose(in) + ADP + phosphate + H(+). Functionally, part of the ABC transporter complex MalEFGK involved in maltose/maltodextrin import. Responsible for energy coupling to the transport system. This is Maltose/maltodextrin import ATP-binding protein MalK from Shigella flexneri serotype 5b (strain 8401).